The sequence spans 210 residues: SAP domain-containing ribonucleoprotein (210 aa).

The residue at position 2 (Ala2) is an N-acetylalanine. The 35-residue stretch at 8–42 folds into the SAP domain; the sequence is LHKLKLAELKQECLARGLETKGIKQDLINRLQAYL. The residue at position 10 (Lys10) is an N6-acetyllysine. Over residues 45–64 the composition is skewed to acidic residues; the sequence is HAEEEANEEDVLGDETEEEE. Positions 45-87 are disordered; that stretch reads HAEEEANEEDVLGDETEEEEPKPIELPVKEEEPPEKAVDMASE. Basic and acidic residues predominate over residues 65–87; that stretch reads PKPIELPVKEEEPPEKAVDMASE. The residue at position 142 (Lys142) is an N6-acetyllysine. The disordered stretch occupies residues 162–210; that stretch reads SSISRKSEDDEKLKKRKERFGIVTSSAGTGTTEDTEAKKRKRAERFGIA. Ser163 carries the phosphoserine modification. A compositionally biased stretch (polar residues) spans 184-193; the sequence is VTSSAGTGTT.

Belongs to the SAP domain-containing ribonucleoprotein family. In terms of assembly, interacts with DDX39A. Interacts with FUS. Interacts (via the C-terminal domain) with DDX39B; the interaction is direct and facilitates RNA binding of DDX39B. Component of the transcription/export (TREX) complex at least composed of ALYREF/THOC4, DDX39B, SARNP/CIP29, CHTOP and the THO subcomplex; TREX seems to have dynamic structure involving ATP-dependent remodeling; in the complex interacts directly with DDX39B in a ATP-dependent manner which bridges it to ALYREF/THOC4.

The protein localises to the nucleus. It is found in the nucleus speckle. Its function is as follows. Binds both single-stranded and double-stranded DNA with higher affinity for the single-stranded form. Specifically binds to scaffold/matrix attachment region DNA. Also binds single-stranded RNA. Enhances RNA unwinding activity of DDX39A. May participate in important transcriptional or translational control of cell growth, metabolism and carcinogenesis. Component of the TREX complex which is thought to couple mRNA transcription, processing and nuclear export, and specifically associates with spliced mRNA and not with unspliced pre-mRNA. The TREX complex is recruited to spliced mRNAs by a transcription-independent mechanism, binds to mRNA upstream of the exon-junction complex (EJC) and is recruited in a splicing- and cap-dependent manner to a region near the 5' end of the mRNA where it functions in mRNA export to the cytoplasm via the TAP/NXF1 pathway. Associates with DDX39B, which facilitates RNA binding of DDX39B and likely plays a role in mRNA export. The chain is SAP domain-containing ribonucleoprotein (Sarnp) from Mus musculus (Mouse).